The primary structure comprises 163 residues: Small ribosomal subunit protein uS9 (163 aa).

The segment covering 1-11 has biased composition (polar residues); that stretch reads MAENTNDSQVV. The segment at 1 to 40 is disordered; it reads MAENTNDSQVVETEEELTNYTTETNAGAGTGTSAIEPGYG. Positions 18–27 are enriched in low complexity; sequence TNYTTETNAG.

This sequence belongs to the universal ribosomal protein uS9 family.

This chain is Small ribosomal subunit protein uS9, found in Bifidobacterium longum (strain DJO10A).